Here is a 373-residue protein sequence, read N- to C-terminus: Protein U3 (373 aa).

The protein belongs to the herpesviridae US22 family.

The sequence is that of Protein U3 (U3) from Human herpesvirus 6A (strain Uganda-1102) (HHV-6 variant A).